Reading from the N-terminus, the 940-residue chain is Alanine--tRNA ligase (940 aa).

Zn(2+) contacts are provided by histidine 581, histidine 585, cysteine 683, and histidine 687.

It belongs to the class-II aminoacyl-tRNA synthetase family. Zn(2+) serves as cofactor.

It is found in the cytoplasm. The catalysed reaction is tRNA(Ala) + L-alanine + ATP = L-alanyl-tRNA(Ala) + AMP + diphosphate. Functionally, catalyzes the attachment of alanine to tRNA(Ala) in a two-step reaction: alanine is first activated by ATP to form Ala-AMP and then transferred to the acceptor end of tRNA(Ala). Also edits incorrectly charged Ser-tRNA(Ala) and Gly-tRNA(Ala) via its editing domain. This is Alanine--tRNA ligase from Leptospira borgpetersenii serovar Hardjo-bovis (strain L550).